The following is a 163-amino-acid chain: Putative defense protein 3 (163 aa).

Residues 1–18 (MMFAYIVAVVSALALTSA) form the signal peptide. The Reelin domain occupies 19 to 163 (YPTGAPSSTC…SAPVTVLSHK (145 aa)). A disulfide bridge links Cys-28 with Cys-103.

The protein belongs to the insect defense protein family.

Its subcellular location is the secreted. Functionally, may have antimicrobial activity. The polypeptide is Putative defense protein 3 (Antheraea mylitta (Tasar silkworm)).